Here is a 122-residue protein sequence, read N- to C-terminus: Large ribosomal subunit protein uL14 (122 aa).

Belongs to the universal ribosomal protein uL14 family. In terms of assembly, part of the 50S ribosomal subunit. Forms a cluster with proteins L3 and L19. In the 70S ribosome, L14 and L19 interact and together make contacts with the 16S rRNA in bridges B5 and B8.

Its function is as follows. Binds to 23S rRNA. Forms part of two intersubunit bridges in the 70S ribosome. The polypeptide is Large ribosomal subunit protein uL14 (Prosthecochloris aestuarii (strain DSM 271 / SK 413)).